The sequence spans 194 residues: Fe/S biogenesis protein NfuA (194 aa).

Positions 152 and 155 each coordinate [4Fe-4S] cluster.

This sequence belongs to the NfuA family. Homodimer. It depends on [4Fe-4S] cluster as a cofactor.

Involved in iron-sulfur cluster biogenesis. Binds a 4Fe-4S cluster, can transfer this cluster to apoproteins, and thereby intervenes in the maturation of Fe/S proteins. Could also act as a scaffold/chaperone for damaged Fe/S proteins. In Pseudomonas fluorescens (strain Pf0-1), this protein is Fe/S biogenesis protein NfuA.